Reading from the N-terminus, the 317-residue chain is Ribosomal large subunit pseudouridine synthase D (317 aa).

Residues 19–83 (NRLDQVLASL…AKNDYQAENI (65 aa)) form the S4 RNA-binding domain. The active site involves Asp140.

This sequence belongs to the pseudouridine synthase RluA family.

The protein resides in the cytoplasm. The catalysed reaction is uridine(1911/1915/1917) in 23S rRNA = pseudouridine(1911/1915/1917) in 23S rRNA. Responsible for synthesis of pseudouridine from uracil at positions 1911, 1915 and 1917 in 23S ribosomal RNA. The protein is Ribosomal large subunit pseudouridine synthase D (rluD) of Buchnera aphidicola subsp. Baizongia pistaciae (strain Bp).